A 169-amino-acid polypeptide reads, in one-letter code: S-ribosylhomocysteine lyase (169 aa).

Fe cation contacts are provided by H54, H58, and C128.

It belongs to the LuxS family. As to quaternary structure, homodimer. Fe cation is required as a cofactor.

It catalyses the reaction S-(5-deoxy-D-ribos-5-yl)-L-homocysteine = (S)-4,5-dihydroxypentane-2,3-dione + L-homocysteine. In terms of biological role, involved in the synthesis of autoinducer 2 (AI-2) which is secreted by bacteria and is used to communicate both the cell density and the metabolic potential of the environment. The regulation of gene expression in response to changes in cell density is called quorum sensing. Catalyzes the transformation of S-ribosylhomocysteine (RHC) to homocysteine (HC) and 4,5-dihydroxy-2,3-pentadione (DPD). This is S-ribosylhomocysteine lyase from Shewanella sediminis (strain HAW-EB3).